The sequence spans 586 residues: Arginine--tRNA ligase (586 aa).

Positions alanine 128–histidine 138 match the 'HIGH' region motif.

It belongs to the class-I aminoacyl-tRNA synthetase family. In terms of assembly, monomer.

The protein localises to the cytoplasm. It catalyses the reaction tRNA(Arg) + L-arginine + ATP = L-arginyl-tRNA(Arg) + AMP + diphosphate. This Legionella pneumophila (strain Corby) protein is Arginine--tRNA ligase.